The primary structure comprises 114 residues: Cytochrome c oxidase subunit 4B (114 aa).

Transmembrane regions (helical) follow at residues 29 to 49, 56 to 76, and 89 to 109; these read QIVVFALMIFLTLMSFMAVAT, FAIPFIFILAVIQFALQLFFF, and AFMISGIFITVPTIAALMLLL.

The protein belongs to the cytochrome c oxidase bacterial subunit 4 family.

The protein resides in the cell membrane. It carries out the reaction 4 Fe(II)-[cytochrome c] + O2 + 8 H(+)(in) = 4 Fe(III)-[cytochrome c] + 2 H2O + 4 H(+)(out). The protein is Cytochrome c oxidase subunit 4B (ctaF) of Alkalihalophilus pseudofirmus (strain ATCC BAA-2126 / JCM 17055 / OF4) (Bacillus pseudofirmus).